The sequence spans 433 residues: Dihydroorotase (433 aa).

Zn(2+) is bound by residues histidine 63 and histidine 65. Residues 65-67 and asparagine 97 each bind substrate; that span reads HLR. Zn(2+)-binding residues include aspartate 155, histidine 182, and histidine 235. Asparagine 283 contacts substrate. Aspartate 310 contributes to the Zn(2+) binding site. The active site involves aspartate 310. Histidine 314 serves as a coordination point for substrate.

It belongs to the metallo-dependent hydrolases superfamily. DHOase family. Class I DHOase subfamily. The cofactor is Zn(2+).

It carries out the reaction (S)-dihydroorotate + H2O = N-carbamoyl-L-aspartate + H(+). It functions in the pathway pyrimidine metabolism; UMP biosynthesis via de novo pathway; (S)-dihydroorotate from bicarbonate: step 3/3. Its function is as follows. Catalyzes the reversible cyclization of carbamoyl aspartate to dihydroorotate. The polypeptide is Dihydroorotase (Anaeromyxobacter dehalogenans (strain 2CP-1 / ATCC BAA-258)).